The sequence spans 103 residues: Large ribosomal subunit protein bL21 (103 aa).

It belongs to the bacterial ribosomal protein bL21 family. As to quaternary structure, part of the 50S ribosomal subunit. Contacts protein L20.

Functionally, this protein binds to 23S rRNA in the presence of protein L20. This is Large ribosomal subunit protein bL21 from Aromatoleum aromaticum (strain DSM 19018 / LMG 30748 / EbN1) (Azoarcus sp. (strain EbN1)).